We begin with the raw amino-acid sequence, 148 residues long: Transcription antitermination protein NusB (148 aa).

The protein belongs to the NusB family.

Its function is as follows. Involved in transcription antitermination. Required for transcription of ribosomal RNA (rRNA) genes. Binds specifically to the boxA antiterminator sequence of the ribosomal RNA (rrn) operons. The chain is Transcription antitermination protein NusB from Novosphingobium aromaticivorans (strain ATCC 700278 / DSM 12444 / CCUG 56034 / CIP 105152 / NBRC 16084 / F199).